The primary structure comprises 351 residues: Outer membrane porin protein 32 (351 aa).

The first 19 residues, 1 to 19, serve as a signal peptide directing secretion; the sequence is MKKSLIALAVLAASGAAMA. Position 20 is a pyrrolidone carboxylic acid (glutamine 20).

The protein to bacterial outer membrane proteins and porins. As to quaternary structure, homotrimer.

It is found in the cell outer membrane. In terms of biological role, forms anion selective channels. The polypeptide is Outer membrane porin protein 32 (omp32) (Delftia acidovorans (Pseudomonas acidovorans)).